The sequence spans 293 residues: N-acetylmannosamine kinase (293 aa).

Residues 5 to 12 and 133 to 140 each bind ATP; these read AIDIGGTK and GVGGGLVI. Zn(2+)-binding residues include H157, C167, C169, and C174.

This sequence belongs to the ROK (NagC/XylR) family. NanK subfamily. In terms of assembly, homodimer.

The enzyme catalyses an N-acyl-D-mannosamine + ATP = an N-acyl-D-mannosamine 6-phosphate + ADP + H(+). It participates in amino-sugar metabolism; N-acetylneuraminate degradation; D-fructose 6-phosphate from N-acetylneuraminate: step 2/5. Functionally, catalyzes the phosphorylation of N-acetylmannosamine (ManNAc) to ManNAc-6-P. This is N-acetylmannosamine kinase from Vibrio vulnificus (strain YJ016).